A 358-amino-acid chain; its full sequence is Phospho-N-acetylmuramoyl-pentapeptide-transferase (358 aa).

The next 10 membrane-spanning stretches (helical) occupy residues 28 to 48 (WALATALLVSIVVGPRFIAWL), 72 to 92 (TMGGLLIGFAVTFSVLLWADL), 96 to 116 (YIWLTLLVFTGFGFIGFLDDY), 133 to 153 (FLWQVGVAVAAMYLLVQLPAY), 164 to 184 (GLTPDLGWLYIPFAVAVMVGS), 196 to 216 (GLAIGPTIVAGIVFSIFIYVA), 233 to 253 (VGEVAVFCGALVGAGLGFLWF), 260 to 280 (VFMGDVGSLSLGGTLGFLAVL), 285 to 305 (LLLLVVGGLFVVETLSVILQV), and 335 to 355 (KIIIRFWITSALLGLIALSVL).

Belongs to the glycosyltransferase 4 family. MraY subfamily. Requires Mg(2+) as cofactor.

The protein localises to the cell inner membrane. It carries out the reaction UDP-N-acetyl-alpha-D-muramoyl-L-alanyl-gamma-D-glutamyl-meso-2,6-diaminopimeloyl-D-alanyl-D-alanine + di-trans,octa-cis-undecaprenyl phosphate = di-trans,octa-cis-undecaprenyl diphospho-N-acetyl-alpha-D-muramoyl-L-alanyl-D-glutamyl-meso-2,6-diaminopimeloyl-D-alanyl-D-alanine + UMP. It functions in the pathway cell wall biogenesis; peptidoglycan biosynthesis. Functionally, catalyzes the initial step of the lipid cycle reactions in the biosynthesis of the cell wall peptidoglycan: transfers peptidoglycan precursor phospho-MurNAc-pentapeptide from UDP-MurNAc-pentapeptide onto the lipid carrier undecaprenyl phosphate, yielding undecaprenyl-pyrophosphoryl-MurNAc-pentapeptide, known as lipid I. The polypeptide is Phospho-N-acetylmuramoyl-pentapeptide-transferase (Nitratidesulfovibrio vulgaris (strain ATCC 29579 / DSM 644 / CCUG 34227 / NCIMB 8303 / VKM B-1760 / Hildenborough) (Desulfovibrio vulgaris)).